The primary structure comprises 590 residues: ATP-dependent lipid A-core flippase (590 aa).

Helical transmembrane passes span 31-51 (IFIA…VIPK), 74-94 (AILT…GYLL), 132-152 (AVIF…ITLV), 159-179 (VALL…VSVI), 259-279 (VTAF…MIQA), and 286-306 (IGGF…LKHL). The 283-residue stretch at 33 to 315 (IAAILAMAVV…LTDINQPLTR (283 aa)) folds into the ABC transmembrane type-1 domain. In terms of domain architecture, ABC transporter spans 347 to 585 (LVFERVGFRY…NGLYAGLHRI (239 aa)). 381-388 (GPSGSGKT) is a binding site for ATP.

Belongs to the ABC transporter superfamily. Lipid exporter (TC 3.A.1.106) family. In terms of assembly, homodimer.

The protein localises to the cell inner membrane. The catalysed reaction is ATP + H2O + lipid A-core oligosaccharideSide 1 = ADP + phosphate + lipid A-core oligosaccharideSide 2.. Its function is as follows. Involved in lipopolysaccharide (LPS) biosynthesis. Translocates lipid A-core from the inner to the outer leaflet of the inner membrane. Transmembrane domains (TMD) form a pore in the inner membrane and the ATP-binding domain (NBD) is responsible for energy generation. The sequence is that of ATP-dependent lipid A-core flippase from Cupriavidus pinatubonensis (strain JMP 134 / LMG 1197) (Cupriavidus necator (strain JMP 134)).